Consider the following 122-residue polypeptide: Small ribosomal subunit protein uS13 (122 aa).

The tract at residues 94-122 is disordered; sequence GLPVRGQSTQKNARTRKGPRKTVAGKKGK. Basic residues predominate over residues 106–122; sequence ARTRKGPRKTVAGKKGK.

Belongs to the universal ribosomal protein uS13 family. As to quaternary structure, part of the 30S ribosomal subunit. Forms a loose heterodimer with protein S19. Forms two bridges to the 50S subunit in the 70S ribosome.

Functionally, located at the top of the head of the 30S subunit, it contacts several helices of the 16S rRNA. In the 70S ribosome it contacts the 23S rRNA (bridge B1a) and protein L5 of the 50S subunit (bridge B1b), connecting the 2 subunits; these bridges are implicated in subunit movement. Contacts the tRNAs in the A and P-sites. The protein is Small ribosomal subunit protein uS13 of Mycoplasmopsis synoviae (strain 53) (Mycoplasma synoviae).